The following is a 361-amino-acid chain: Histidinol-phosphate aminotransferase (361 aa).

N6-(pyridoxal phosphate)lysine is present on Lys219.

Belongs to the class-II pyridoxal-phosphate-dependent aminotransferase family. Histidinol-phosphate aminotransferase subfamily. In terms of assembly, homodimer. It depends on pyridoxal 5'-phosphate as a cofactor.

The catalysed reaction is L-histidinol phosphate + 2-oxoglutarate = 3-(imidazol-4-yl)-2-oxopropyl phosphate + L-glutamate. It participates in amino-acid biosynthesis; L-histidine biosynthesis; L-histidine from 5-phospho-alpha-D-ribose 1-diphosphate: step 7/9. The protein is Histidinol-phosphate aminotransferase of Cereibacter sphaeroides (strain ATCC 17023 / DSM 158 / JCM 6121 / CCUG 31486 / LMG 2827 / NBRC 12203 / NCIMB 8253 / ATH 2.4.1.) (Rhodobacter sphaeroides).